The sequence spans 76 residues: Putative small nuclear ribonucleoprotein G-like protein 15 (76 aa).

The Sm domain maps to 4–76 (AHPPELKKFT…IIMLEALERV (73 aa)).

It belongs to the snRNP Sm proteins family.

It localises to the nucleus. Associated with snRNP U1, U2, U4/U6 and U5. This Homo sapiens (Human) protein is Putative small nuclear ribonucleoprotein G-like protein 15 (SNRPGP15).